Reading from the N-terminus, the 200-residue chain is ATP synthase subunit s, mitochondrial (200 aa).

The N-terminal 25 residues, 1-25 (MMLFGKISQQLCGVKKLPWSCDSRY), are a transit peptide targeting the mitochondrion. An N-terminal domain region spans residues 1 to 61 (MMLFGKISQQ…SEWLLRCGAM (61 aa)). Gly59 serves as a coordination point for Mg(2+). 4 LRR repeats span residues 62-87 (VRYH…KYKI), 88-116 (QAID…KIRL), 117-141 (CKCH…KTIL), and 142-173 (EMEI…LSDL). Thr93 serves as a coordination point for Mg(2+).

It belongs to the ATP synthase subunit s family. Homotetramer. Associates with ATP synthase.

Its subcellular location is the mitochondrion. It is found in the mitochondrion inner membrane. Involved in regulation of mitochondrial membrane ATP synthase. Necessary for H(+) conduction of ATP synthase. Facilitates energy-driven catalysis of ATP synthesis by blocking a proton leak through an alternative proton exit pathway. The chain is ATP synthase subunit s, mitochondrial (DMAC2L) from Pongo abelii (Sumatran orangutan).